A 158-amino-acid polypeptide reads, in one-letter code: Transcription antitermination protein NusB (158 aa).

A compositionally biased stretch (polar residues) spans 1-13 (MSEAGDTSPQPGK). The tract at residues 1-24 (MSEAGDTSPQPGKTGQPKAGDRRR) is disordered.

The protein belongs to the NusB family.

Its function is as follows. Involved in transcription antitermination. Required for transcription of ribosomal RNA (rRNA) genes. Binds specifically to the boxA antiterminator sequence of the ribosomal RNA (rrn) operons. The sequence is that of Transcription antitermination protein NusB from Marinobacter nauticus (strain ATCC 700491 / DSM 11845 / VT8) (Marinobacter aquaeolei).